The following is a 400-amino-acid chain: Argininosuccinate synthase (400 aa).

Ala-8–Ser-16 is a binding site for ATP. An L-citrulline-binding site is contributed by Tyr-87. Gly-117 provides a ligand contact to ATP. L-aspartate contacts are provided by Thr-119, Asn-123, and Asp-124. Asn-123 serves as a coordination point for L-citrulline. Residues Arg-127, Ser-175, Glu-260, and Tyr-272 each coordinate L-citrulline.

It belongs to the argininosuccinate synthase family. Type 1 subfamily. In terms of assembly, homotetramer.

Its subcellular location is the cytoplasm. It catalyses the reaction L-citrulline + L-aspartate + ATP = 2-(N(omega)-L-arginino)succinate + AMP + diphosphate + H(+). Its pathway is amino-acid biosynthesis; L-arginine biosynthesis; L-arginine from L-ornithine and carbamoyl phosphate: step 2/3. In Mycobacterium sp. (strain KMS), this protein is Argininosuccinate synthase.